The primary structure comprises 993 residues: Glycine dehydrogenase (decarboxylating) (993 aa).

At lysine 715 the chain carries N6-(pyridoxal phosphate)lysine.

It belongs to the GcvP family. In terms of assembly, the glycine cleavage system is composed of four proteins: P, T, L and H. It depends on pyridoxal 5'-phosphate as a cofactor.

It carries out the reaction N(6)-[(R)-lipoyl]-L-lysyl-[glycine-cleavage complex H protein] + glycine + H(+) = N(6)-[(R)-S(8)-aminomethyldihydrolipoyl]-L-lysyl-[glycine-cleavage complex H protein] + CO2. In terms of biological role, the glycine cleavage system catalyzes the degradation of glycine. The P protein binds the alpha-amino group of glycine through its pyridoxal phosphate cofactor; CO(2) is released and the remaining methylamine moiety is then transferred to the lipoamide cofactor of the H protein. This is Glycine dehydrogenase (decarboxylating) from Xylella fastidiosa (strain Temecula1 / ATCC 700964).